We begin with the raw amino-acid sequence, 228 residues long: Probable septum site-determining protein MinC (228 aa).

The protein belongs to the MinC family. In terms of assembly, interacts with MinD and FtsZ.

In terms of biological role, cell division inhibitor that blocks the formation of polar Z ring septums. Rapidly oscillates between the poles of the cell to destabilize FtsZ filaments that have formed before they mature into polar Z rings. Prevents FtsZ polymerization. In Symbiobacterium thermophilum (strain DSM 24528 / JCM 14929 / IAM 14863 / T), this protein is Probable septum site-determining protein MinC.